Here is a 129-residue protein sequence, read N- to C-terminus: Small ribosomal subunit protein uS11 (129 aa).

The protein belongs to the universal ribosomal protein uS11 family. Part of the 30S ribosomal subunit. Interacts with proteins S7 and S18. Binds to IF-3.

In terms of biological role, located on the platform of the 30S subunit, it bridges several disparate RNA helices of the 16S rRNA. Forms part of the Shine-Dalgarno cleft in the 70S ribosome. This is Small ribosomal subunit protein uS11 from Idiomarina loihiensis (strain ATCC BAA-735 / DSM 15497 / L2-TR).